We begin with the raw amino-acid sequence, 227 residues long: 2,3-bisphosphoglycerate-dependent phosphoglycerate mutase (227 aa).

Residues 7 to 14, 20 to 21, arginine 59, 86 to 89, lysine 97, 113 to 114, and 182 to 183 each bind substrate; these read RHGQSEWN, TG, ERHY, RR, and GN. The active-site Tele-phosphohistidine intermediate is the histidine 8. Glutamate 86 functions as the Proton donor/acceptor in the catalytic mechanism.

Belongs to the phosphoglycerate mutase family. BPG-dependent PGAM subfamily. As to quaternary structure, homodimer.

The enzyme catalyses (2R)-2-phosphoglycerate = (2R)-3-phosphoglycerate. It functions in the pathway carbohydrate degradation; glycolysis; pyruvate from D-glyceraldehyde 3-phosphate: step 3/5. Catalyzes the interconversion of 2-phosphoglycerate and 3-phosphoglycerate. The sequence is that of 2,3-bisphosphoglycerate-dependent phosphoglycerate mutase from Neisseria meningitidis serogroup A / serotype 4A (strain DSM 15465 / Z2491).